Here is a 664-residue protein sequence, read N- to C-terminus: DNA topoisomerase 4 subunit B (664 aa).

ATP-binding positions include tyrosine 7, asparagine 47, aspartate 74, 114 to 120 (GLHGVGA), and lysine 341. A disordered region spans residues 386–418 (REAARKAREDARSGKKNKRKDTLLSGKLTPAQS). The span at 387–398 (EAARKAREDARS) shows a compositional bias: basic and acidic residues. The Toprim domain maps to 424–538 (NELYLVEGDS…AGRVFIALPP (115 aa)). 3 residues coordinate Mg(2+): glutamate 430, aspartate 503, and aspartate 505.

It belongs to the type II topoisomerase family. ParE type 2 subfamily. As to quaternary structure, heterotetramer composed of ParC and ParE. Mg(2+) is required as a cofactor. It depends on Mn(2+) as a cofactor. Requires Ca(2+) as cofactor.

The enzyme catalyses ATP-dependent breakage, passage and rejoining of double-stranded DNA.. In terms of biological role, topoisomerase IV is essential for chromosome segregation. It relaxes supercoiled DNA. Performs the decatenation events required during the replication of a circular DNA molecule. The protein is DNA topoisomerase 4 subunit B of Staphylococcus epidermidis (strain ATCC 35984 / DSM 28319 / BCRC 17069 / CCUG 31568 / BM 3577 / RP62A).